We begin with the raw amino-acid sequence, 336 residues long: Ferredoxin--NADP reductase (336 aa).

Residues aspartate 37, glutamine 45, tyrosine 50, valine 90, phenylalanine 124, aspartate 286, and threonine 327 each coordinate FAD.

This sequence belongs to the ferredoxin--NADP reductase type 2 family. Homodimer. The cofactor is FAD.

It catalyses the reaction 2 reduced [2Fe-2S]-[ferredoxin] + NADP(+) + H(+) = 2 oxidized [2Fe-2S]-[ferredoxin] + NADPH. The chain is Ferredoxin--NADP reductase from Enterococcus faecalis (strain ATCC 700802 / V583).